The chain runs to 330 residues: Ferredoxin--NADP reductase (330 aa).

Residues glutamate 35, glutamine 43, tyrosine 48, valine 90, phenylalanine 123, aspartate 285, and threonine 326 each contribute to the FAD site.

This sequence belongs to the ferredoxin--NADP reductase type 2 family. As to quaternary structure, homodimer. FAD serves as cofactor.

It carries out the reaction 2 reduced [2Fe-2S]-[ferredoxin] + NADP(+) + H(+) = 2 oxidized [2Fe-2S]-[ferredoxin] + NADPH. The sequence is that of Ferredoxin--NADP reductase from Streptococcus equi subsp. zooepidemicus (strain MGCS10565).